Here is a 156-residue protein sequence, read N- to C-terminus: Small ribosomal subunit protein uS7 (156 aa).

The protein belongs to the universal ribosomal protein uS7 family. In terms of assembly, part of the 30S ribosomal subunit. Contacts proteins S9 and S11.

In terms of biological role, one of the primary rRNA binding proteins, it binds directly to 16S rRNA where it nucleates assembly of the head domain of the 30S subunit. Is located at the subunit interface close to the decoding center, probably blocks exit of the E-site tRNA. The protein is Small ribosomal subunit protein uS7 of Prochlorococcus marinus (strain MIT 9312).